A 376-amino-acid polypeptide reads, in one-letter code: uncharacterized protein (376 aa).

It belongs to the choline/ethanolamine kinase family.

This is an uncharacterized protein from Caenorhabditis elegans.